Reading from the N-terminus, the 343-residue chain is UDP-N-acetylglucosamine--N-acetylmuramyl-(pentapeptide) pyrophosphoryl-undecaprenol N-acetylglucosamine transferase (343 aa).

UDP-N-acetyl-alpha-D-glucosamine is bound by residues 10–12, N113, S174, and Q275; that span reads TGG.

The protein belongs to the glycosyltransferase 28 family. MurG subfamily.

It localises to the cell membrane. It catalyses the reaction di-trans,octa-cis-undecaprenyl diphospho-N-acetyl-alpha-D-muramoyl-L-alanyl-D-glutamyl-meso-2,6-diaminopimeloyl-D-alanyl-D-alanine + UDP-N-acetyl-alpha-D-glucosamine = di-trans,octa-cis-undecaprenyl diphospho-[N-acetyl-alpha-D-glucosaminyl-(1-&gt;4)]-N-acetyl-alpha-D-muramoyl-L-alanyl-D-glutamyl-meso-2,6-diaminopimeloyl-D-alanyl-D-alanine + UDP + H(+). The protein operates within cell wall biogenesis; peptidoglycan biosynthesis. Functionally, cell wall formation. Catalyzes the transfer of a GlcNAc subunit on undecaprenyl-pyrophosphoryl-MurNAc-pentapeptide (lipid intermediate I) to form undecaprenyl-pyrophosphoryl-MurNAc-(pentapeptide)GlcNAc (lipid intermediate II). In Wolbachia sp. subsp. Drosophila simulans (strain wRi), this protein is UDP-N-acetylglucosamine--N-acetylmuramyl-(pentapeptide) pyrophosphoryl-undecaprenol N-acetylglucosamine transferase.